Reading from the N-terminus, the 359-residue chain is Uracil-DNA glycosylase (359 aa).

The N-terminal 21 residues, 1 to 21 (MWCMRRLPTNSVMTVARKRKQ), are a transit peptide targeting the mitochondrion. The active-site Proton acceptor is aspartate 162.

The protein belongs to the uracil-DNA glycosylase (UDG) superfamily. UNG family.

It localises to the mitochondrion. The protein resides in the nucleus. It catalyses the reaction Hydrolyzes single-stranded DNA or mismatched double-stranded DNA and polynucleotides, releasing free uracil.. In terms of biological role, excises uracil residues from the DNA which can arise as a result of misincorporation of dUMP residues by DNA polymerase or due to deamination of cytosine. Not involved in strand-directed mismatch repair. In Saccharomyces cerevisiae (strain ATCC 204508 / S288c) (Baker's yeast), this protein is Uracil-DNA glycosylase.